A 168-amino-acid polypeptide reads, in one-letter code: Peptidyl-Lys metalloendopeptidase (168 aa).

Intrachain disulfides connect Cys6/Cys76 and Cys78/Cys98. Position 118 (His118) interacts with Zn(2+). The active site involves Glu119. Zn(2+)-binding residues include His122 and Asp131.

It depends on Zn(2+) as a cofactor.

The protein resides in the secreted. It carries out the reaction Preferential cleavage in proteins: -Xaa-|-Lys- (in which Xaa may be Pro).. Inhibited by chelating agents such as EDTA and 1,10-phenanthroline. This chain is Peptidyl-Lys metalloendopeptidase (MEP), found in Pleurotus ostreatus (Oyster mushroom).